We begin with the raw amino-acid sequence, 932 residues long: Valine--tRNA ligase (932 aa).

The short motif at 75–85 (PNVTGQLHMGH) is the 'HIGH' region element. The 'KMSKS' region motif lies at 568–572 (KMSKS). Residue Lys571 participates in ATP binding. A coiled-coil region spans residues 863–929 (TVDVAAERKR…ERITARLEGL (67 aa)).

It belongs to the class-I aminoacyl-tRNA synthetase family. ValS type 1 subfamily. As to quaternary structure, monomer.

The protein localises to the cytoplasm. It catalyses the reaction tRNA(Val) + L-valine + ATP = L-valyl-tRNA(Val) + AMP + diphosphate. Its function is as follows. Catalyzes the attachment of valine to tRNA(Val). As ValRS can inadvertently accommodate and process structurally similar amino acids such as threonine, to avoid such errors, it has a 'posttransfer' editing activity that hydrolyzes mischarged Thr-tRNA(Val) in a tRNA-dependent manner. This Corynebacterium jeikeium (strain K411) protein is Valine--tRNA ligase.